Reading from the N-terminus, the 394-residue chain is RNA demethylase ALKBH5 (394 aa).

Disordered regions lie at residues 1–26 (MAAA…YKAG) and 48–83 (AEPY…EEAR). Residue alanine 2 is modified to N-acetylalanine. A Glycyl lysine isopeptide (Lys-Gly) (interchain with G-Cter in ubiquitin) cross-link involves residue lysine 57. The span at 59-83 (KYPEDSDPERSDFEEQQLQKEEEAR) shows a compositional bias: basic and acidic residues. Phosphoserine occurs at positions 64 and 69. A coiled-coil region spans residues 67–116 (ERSDFEEQQLQKEEEARKVKSGIRQMRLFSQDECAKIEARIDEVVSRAEK). Lysine 86 is covalently cross-linked (Glycyl lysine isopeptide (Lys-Gly) (interchain with G-Cter in SUMO1)). A Phosphoserine modification is found at serine 87. N6-acetyllysine is present on lysine 132. Tyrosine 139 is a catalytic residue. The 2-oxoglutarate site is built by asparagine 193, tyrosine 195, and histidine 204. Cysteine 230 and cysteine 267 are joined by a disulfide. Lysine 235 bears the N6-acetyllysine mark. Histidine 266 and arginine 277 together coordinate 2-oxoglutarate. Residues 298–394 (SSSVLPPSYA…PARKVKMRRH (97 aa)) form a disordered region. Lysine 321 is covalently cross-linked (Glycyl lysine isopeptide (Lys-Gly) (interchain with G-Cter in SUMO1)). Residue serine 325 is modified to Phosphoserine. Residue lysine 328 forms a Glycyl lysine isopeptide (Lys-Gly) (interchain with G-Cter in SUMO2) linkage. Over residues 328–349 (KADPDAAHRPRILEMDKEENRR) the composition is skewed to basic and acidic residues. Residues serine 371 and serine 384 each carry the phosphoserine modification.

The protein belongs to the alkB family. Monomer. Interacts with RBM33; promoting desumoylation by SENP1 and recruitment to N(6)-methyladenosine-containing mRNAs. Interacts (when acetylated by KAT8) with PSPC1; interaction facilitates recognition of N(6)-methyladenosine (m6A) mRNA. It depends on Fe(2+) as a cofactor. Phosphorylated at Ser-87 and Ser-325 in response to reactive oxygen species (ROS), promoting sumoylation and inactivation. In terms of processing, acetylated by KAT8 at Lys-235, promoting interaction with PSPC1, thereby facilitating recognition of N(6)-methyladenosine (m6A) mRNA by ALKBH5. Deacetylated at Lys-235 by HDAC7. Post-translationally, sumoylated at Lys-86 and Lys-321 by PIAS4 following phosphorylation at Ser-87 and Ser-325 in response to reactive oxygen species (ROS), inhibiting the RNA demethylase activity. Desumoylated by SENP1; relieving RNA demethylase inhibition, leading to N(6)-methyladenosine-containing mRNAs demethylation. Ubiquitinated at Lys-57 via 'Lys-48'-linked polyubiquitin chain, leading to its degradation by the proteasome. Deubiquitinated at Lys-57 by USP9X, promoting its stabilizazion.

Its subcellular location is the nucleus speckle. The enzyme catalyses an N(6)-methyladenosine in mRNA + 2-oxoglutarate + O2 = an adenosine in mRNA + formaldehyde + succinate + CO2. With respect to regulation, RNA demethylase activity is inhibited following sumoylation. Inhibition is relieved following desumoylation. Dioxygenase that specifically demethylates N(6)-methyladenosine (m6A) RNA, the most prevalent internal modification of messenger RNA (mRNA) in higher eukaryotes. Demethylates RNA by oxidative demethylation, which requires molecular oxygen, alpha-ketoglutarate and iron. Demethylation of m6A mRNA affects mRNA processing, translation and export. Can also demethylate N(6)-methyladenosine in single-stranded DNA (in vitro). Required for the late meiotic and haploid phases of spermatogenesis by mediating m6A demethylation in spermatocytes and round spermatids: m6A demethylation of target transcripts is required for correct splicing and the production of longer 3'-UTR mRNAs in male germ cells. Involved in paraspeckle assembly, a nuclear membraneless organelle, by undergoing liquid-liquid phase separation. Paraspeckle assembly is coupled with m6A demethylation of RNAs, such as NEAT1 non-coding RNA. Also acts as a negative regulator of T-cell development: inhibits gamma-delta T-cell proliferation via demethylation of JAG1 and NOTCH2 transcripts. Inhibits regulatory T-cell (Treg) recruitment by mediating demethylation and destabilization of CCL28 mRNAs. The polypeptide is RNA demethylase ALKBH5 (ALKBH5) (Bos taurus (Bovine)).